The sequence spans 38 residues: Large ribosomal subunit protein bL36 (38 aa).

This sequence belongs to the bacterial ribosomal protein bL36 family.

This Acinetobacter baylyi (strain ATCC 33305 / BD413 / ADP1) protein is Large ribosomal subunit protein bL36.